Here is a 76-residue protein sequence, read N- to C-terminus: Large ribosomal subunit protein uL29 (76 aa).

The protein belongs to the universal ribosomal protein uL29 family.

The chain is Large ribosomal subunit protein uL29 from Corynebacterium efficiens (strain DSM 44549 / YS-314 / AJ 12310 / JCM 11189 / NBRC 100395).